Reading from the N-terminus, the 264-residue chain is Short chain dehydrogenase/reductase AacuN (264 aa).

NADP(+) contacts are provided by Ile-24, Asp-70, Asn-97, and Arg-130. Residues Ser-146, Ser-147, and Tyr-161 each act as proton donor in the active site. NADP(+) is bound by residues Tyr-161, Lys-165, and Thr-196. The active-site Lowers pKa of active site Tyr is Lys-165.

Belongs to the short-chain dehydrogenases/reductases (SDR) family.

It carries out the reaction 3,8,9,10-tetrahydroxy-6-methyl-1,4-dihydroanthracen-1-one + NADPH + H(+) = (3R)-3,8,9,10-tetrahydroxy-6-methyl-1,2,3,4-tetrahydroanthracen-1-one + NADP(+). The protein operates within secondary metabolite biosynthesis. In terms of biological role, atrochrysone carboxylic acid synthase; part of the gene cluster that mediates the biosynthesis of the tetrahydroxanthone dimer secalonic acid D. The pathway begins with the synthesis of atrochrysone thioester by the polyketide synthase AacuL. The atrochrysone carboxyl ACP thioesterase AacuM then breaks the thioester bond and releases the atrochrysone carboxylic acid from AacuL. Atrochrysone carboxylic acid is decarboxylated by the decarboxylase AacuI, and oxidized by the anthrone oxygenase AacuG to yield emodin. Emodin is then reduced to emodin hydroquinone by a yet unidentified oxidoreductase. A-ring reduction by the short chain dehydrogenase AacuN, dehydration by the scytalone dehydratase-like protein AacuK and probable spontaneous re-oxidation, results in overall deoxygenation to chrysophanol. Baeyer-Villiger oxidation by the Baeyer-Villiger monooxygenase (BVMO) AacuH then yields monodictyphenone. Monodictyphenone is transformed into compounds with the tetrahydroxanthone skeleton via methylesterification by the methyltransferase AacuQ, followed by the action of the flavin-dependent monooxygenase AacuC, the isomerase AacuP, and the short chain dehydrogenase/reductase AacuF or AacuD. AacuF and AacuD should accept the same compound as a substrate but perform the ketoreduction with a different stereoselectivity, thus yielding blennolides B and A, respectively. In the final step of the biosynthesis, the cytochrome P450 monooxygenase AacuE accepts blennolide B and/or blennolide A to conduct the dimerization reaction to furnish the tetrahydroxanthone dimers, secalonic acids D, B, and F. The sequence is that of Short chain dehydrogenase/reductase AacuN from Aspergillus aculeatus (strain ATCC 16872 / CBS 172.66 / WB 5094).